We begin with the raw amino-acid sequence, 291 residues long: Lipoyl synthase (291 aa).

[4Fe-4S] cluster-binding residues include Cys-36, Cys-41, Cys-47, Cys-62, Cys-66, Cys-69, and Ser-275. Positions 48–264 (FSKKTATFLI…KEFAISIGFK (217 aa)) constitute a Radical SAM core domain.

The protein belongs to the radical SAM superfamily. Lipoyl synthase family. [4Fe-4S] cluster is required as a cofactor.

It is found in the cytoplasm. The catalysed reaction is [[Fe-S] cluster scaffold protein carrying a second [4Fe-4S](2+) cluster] + N(6)-octanoyl-L-lysyl-[protein] + 2 oxidized [2Fe-2S]-[ferredoxin] + 2 S-adenosyl-L-methionine + 4 H(+) = [[Fe-S] cluster scaffold protein] + N(6)-[(R)-dihydrolipoyl]-L-lysyl-[protein] + 4 Fe(3+) + 2 hydrogen sulfide + 2 5'-deoxyadenosine + 2 L-methionine + 2 reduced [2Fe-2S]-[ferredoxin]. The protein operates within protein modification; protein lipoylation via endogenous pathway; protein N(6)-(lipoyl)lysine from octanoyl-[acyl-carrier-protein]: step 2/2. Functionally, catalyzes the radical-mediated insertion of two sulfur atoms into the C-6 and C-8 positions of the octanoyl moiety bound to the lipoyl domains of lipoate-dependent enzymes, thereby converting the octanoylated domains into lipoylated derivatives. The sequence is that of Lipoyl synthase from Caldicellulosiruptor bescii (strain ATCC BAA-1888 / DSM 6725 / KCTC 15123 / Z-1320) (Anaerocellum thermophilum).